The primary structure comprises 768 residues: DNA replication licensing factor MCM3 homolog 2 (768 aa).

The 208-residue stretch at 290-497 (TFDLLGNSLA…IDRQISEHVA (208 aa)) folds into the MCM domain. 340-347 (GDPSVAKS) lines the ATP pocket. Residues 472–475 (SRFD) carry the Arginine finger motif. Basic and acidic residues predominate over residues 661-670 (EMKQQADHDA). A disordered region spans residues 661–689 (EMKQQADHDAGATGGTVDGHGSSGNDPMD). Gly residues predominate over residues 672-682 (ATGGTVDGHGS).

This sequence belongs to the MCM family.

The protein localises to the nucleus. The enzyme catalyses ATP + H2O = ADP + phosphate + H(+). Acts as a factor that allows the DNA to undergo a single round of replication per cell cycle. Required for DNA replication and cell proliferation. May act as a component of the MCM complex which is the putative replicative helicase of the replication licensing system in eukaryotic cells. In Zea mays (Maize), this protein is DNA replication licensing factor MCM3 homolog 2 (ROA2).